Reading from the N-terminus, the 626-residue chain is Hormonally up-regulated neu tumor-associated kinase homolog B (626 aa).

ATP contacts are provided by residues 1 to 2 (KV) and K17. The Protein kinase domain occupies 1–246 (KVREGLHVGT…IQQALANRWL (246 aa)). D112 functions as the Proton acceptor in the catalytic mechanism. Positions 336-357 (KYKMNKNSYEERRSKDLEKRGE) are enriched in basic and acidic residues. Disordered regions lie at residues 336 to 407 (KYKM…ESFG), 477 to 574 (VNRE…RSRG), and 590 to 615 (QVVS…PGYA). Residues 374 to 390 (SHRQSTCLTPQGHSSSK) show a composition bias toward polar residues. Over residues 392-405 (PIKERRSSKSERES) the composition is skewed to basic and acidic residues. The span at 518-532 (DNTSPLKGHSNQASF) shows a compositional bias: polar residues. Residues 539–555 (SPSSPESMSPTSPHSPS) show a composition bias toward low complexity. Residues 556–566 (CNNNISGNLGS) are compositionally biased toward polar residues.

Belongs to the protein kinase superfamily. CAMK Ser/Thr protein kinase family. SNF1 subfamily. As to expression, in the egg, expressed predominantly in the animal hemisphere. This pattern of expression persists throughout the cleavage and blastula stages. At the gastrula stage, expression is restricted to the ectoderm. In later-stage embryos, expressed over the entire embryonic surface including the open neural plate at stage 15 and the neural tube at stage 22. In tadpoles, strongly expressed in the neural tube, motor neurons, brain regions and sensory organs (otic vesicle and eye). Also expressed in the perisomitic mesoderm, brachial arches and embryonic epidermis of tadpoles.

The enzyme catalyses L-seryl-[protein] + ATP = O-phospho-L-seryl-[protein] + ADP + H(+). The catalysed reaction is L-threonyl-[protein] + ATP = O-phospho-L-threonyl-[protein] + ADP + H(+). This is Hormonally up-regulated neu tumor-associated kinase homolog B (hunk-b) from Xenopus laevis (African clawed frog).